The primary structure comprises 294 residues: Early 4 ORF6 protein (294 aa).

The short motif at 239-255 (ARRTRRLMLRAVRIIAE) is the Nuclear localization signal element.

The protein belongs to the adenoviridae E4 30 to 34 kDa protein family. As to quaternary structure, interacts with E1B-55k.

The protein resides in the host nucleus. Its subcellular location is the host cytoplasm. Its function is as follows. Plays a major role to prevent cellular inhibition of viral genome replication by nuclear bodies. Assembles an SCF-like E3 ubiquitin ligase complex based on the cellular proteins ELOB, ELOC, CUL5 and RBX1, in cooperation with viral E1B-55K. This viral RING-type ligase ubiquitinates cellular substrates prior to proteasomal degradation: p53/TP53, LIG4, MRE11-RAD50-NBS1 (MRN) complex, ITGA3, DAXX and BLM. The polypeptide is Early 4 ORF6 protein (Homo sapiens (Human)).